A 349-amino-acid chain; its full sequence is Fe(3+) ions import ATP-binding protein FbpC (349 aa).

One can recognise an ABC transporter domain in the interval 4 to 236; the sequence is LELHHIGKSY…PVDEPTATFL (233 aa). 36–43 contributes to the ATP binding site; that stretch reads GPSGSGKT.

Belongs to the ABC transporter superfamily. Fe(3+) ion importer (TC 3.A.1.10) family. In terms of assembly, the complex is composed of two ATP-binding proteins (FbpC), two transmembrane proteins (FbpB) and a solute-binding protein (FbpA).

The protein localises to the cell inner membrane. The enzyme catalyses Fe(3+)(out) + ATP + H2O = Fe(3+)(in) + ADP + phosphate + H(+). In terms of biological role, part of the ABC transporter complex FbpABC involved in Fe(3+) ions import. Responsible for energy coupling to the transport system. The sequence is that of Fe(3+) ions import ATP-binding protein FbpC from Yersinia pseudotuberculosis serotype I (strain IP32953).